Here is a 243-residue protein sequence, read N- to C-terminus: DNA repair protein RecO (243 aa).

This sequence belongs to the RecO family.

In terms of biological role, involved in DNA repair and RecF pathway recombination. This Chlamydia trachomatis serovar L2 (strain ATCC VR-902B / DSM 19102 / 434/Bu) protein is DNA repair protein RecO.